A 421-amino-acid polypeptide reads, in one-letter code: Type II methyltransferase M.TaqI (421 aa).

The segment covering methionine 1–leucine 18 has biased composition (low complexity). Positions methionine 1–arginine 20 are disordered. Residues threonine 23, glutamate 45 to cysteine 48, glutamate 71, aspartate 89, and proline 107 each bind S-adenosyl-L-methionine.

It belongs to the N(4)/N(6)-methyltransferase family.

The enzyme catalyses a 2'-deoxyadenosine in DNA + S-adenosyl-L-methionine = an N(6)-methyl-2'-deoxyadenosine in DNA + S-adenosyl-L-homocysteine + H(+). In terms of biological role, a gamma subtype methylase that recognizes the double-stranded sequence 5'-TCGA-3', methylates A-4 on both strands and protects the DNA from cleavage by the TaqI endonuclease. In Thermus aquaticus, this protein is Type II methyltransferase M.TaqI (taqIM).